The chain runs to 259 residues: uncharacterized protein (259 aa).

To M.thermoautotrophicum MTH738.

This is an uncharacterized protein from Methanocaldococcus jannaschii (strain ATCC 43067 / DSM 2661 / JAL-1 / JCM 10045 / NBRC 100440) (Methanococcus jannaschii).